The primary structure comprises 66 residues: Large ribosomal subunit protein uL29 (66 aa).

This sequence belongs to the universal ribosomal protein uL29 family.

This is Large ribosomal subunit protein uL29 from Lachnospira eligens (strain ATCC 27750 / DSM 3376 / VPI C15-48 / C15-B4) (Eubacterium eligens).